The following is a 572-amino-acid chain: Oxygen-dependent choline dehydrogenase (572 aa).

9 to 38 is a binding site for FAD; sequence DYVIIGGGSAGSVLGARLSEDKDKNVLVLE. Catalysis depends on His477, which acts as the Proton acceptor.

The protein belongs to the GMC oxidoreductase family. It depends on FAD as a cofactor.

It carries out the reaction choline + A = betaine aldehyde + AH2. The catalysed reaction is betaine aldehyde + NAD(+) + H2O = glycine betaine + NADH + 2 H(+). The protein operates within amine and polyamine biosynthesis; betaine biosynthesis via choline pathway; betaine aldehyde from choline (cytochrome c reductase route): step 1/1. Its function is as follows. Involved in the biosynthesis of the osmoprotectant glycine betaine. Catalyzes the oxidation of choline to betaine aldehyde and betaine aldehyde to glycine betaine at the same rate. This chain is Oxygen-dependent choline dehydrogenase, found in Staphylococcus epidermidis (strain ATCC 35984 / DSM 28319 / BCRC 17069 / CCUG 31568 / BM 3577 / RP62A).